We begin with the raw amino-acid sequence, 253 residues long: 5'-nucleotidase SurE (253 aa).

A divalent metal cation contacts are provided by Asp-8, Asp-9, Ser-39, and Asn-92.

This sequence belongs to the SurE nucleotidase family. Requires a divalent metal cation as cofactor.

The protein localises to the cytoplasm. It catalyses the reaction a ribonucleoside 5'-phosphate + H2O = a ribonucleoside + phosphate. Nucleotidase that shows phosphatase activity on nucleoside 5'-monophosphates. This Burkholderia thailandensis (strain ATCC 700388 / DSM 13276 / CCUG 48851 / CIP 106301 / E264) protein is 5'-nucleotidase SurE.